The chain runs to 230 residues: Nicotinamide riboside kinase (230 aa).

Position 12–20 (12–20 (GASCSGKST)) interacts with ATP. Positions 19 and 38 each coordinate Mg(2+). Asp38 (proton acceptor) is an active-site residue. Substrate-binding positions include 38–41 (DDFY) and 56–57 (WD). An ATP-binding site is contributed by Arg153. Residues Arg154 and 159–160 (GY) contribute to the substrate site. Residues 157–159 (RTG) and 203–205 (RIQ) contribute to the ATP site.

This sequence belongs to the uridine kinase family. NRK subfamily.

The catalysed reaction is beta-nicotinamide D-riboside + ATP = beta-nicotinamide D-ribonucleotide + ADP + H(+). It catalyses the reaction beta-D-ribosylnicotinate + ATP = nicotinate beta-D-ribonucleotide + ADP + H(+). The protein operates within cofactor biosynthesis; NAD(+) biosynthesis. In terms of biological role, catalyzes the phosphorylation of nicotinamide riboside (NR) and nicotinic acid riboside (NaR) to form nicotinamide mononucleotide (NMN) and nicotinic acid mononucleotide (NaMN). In Schizosaccharomyces pombe (strain 972 / ATCC 24843) (Fission yeast), this protein is Nicotinamide riboside kinase (nrk1).